Here is a 171-residue protein sequence, read N- to C-terminus: Protein TIFY 11d (171 aa).

A Tify domain is found at 65 to 100 (PSAGTAPLTIFYDGRMVVVDDVPAEKAAELMRLAGS). Residues 117–142 (PIARKASLQRFLQKRKHRITTTSEPY) carry the Jas motif. Positions 119 to 126 (ARKASLQR) match the Nuclear localization signal motif.

This sequence belongs to the TIFY/JAZ family. As to quaternary structure, interacts with BHLH148 and COI1A. Interacts with COI1A, COI1B and COI2 in a coronatine-dependent manner. Coronatine is an analog of jasmonoyl isoleucine (JA-Ile). Post-translationally, ubiquitinated. Increase in jasmonoyl isoleucine (JA-Ile) levels mediates its degradation via COI1A-mediated proteasome pathway.

The protein resides in the nucleus. In terms of biological role, repressor of jasmonate (JA) responses. May act on an initial response of JA-regulated gene expression toward drought tolerance as part of a BHLH148-TIFY11D/JAZ12-COI1A complex. In Oryza sativa subsp. indica (Rice), this protein is Protein TIFY 11d.